A 304-amino-acid polypeptide reads, in one-letter code: Haloalkane dehalogenase (304 aa).

Positions 42–154 constitute an AB hydrolase-1 domain; the sequence is PIVFLHGNPT…DSVDLSPEFV (113 aa). Asp-114 (nucleophile) is an active-site residue. Glu-138 (proton donor) is an active-site residue. Residue His-280 is the Proton acceptor of the active site.

The protein belongs to the haloalkane dehalogenase family. Type 2 subfamily. In terms of assembly, monomer.

The catalysed reaction is 1-haloalkane + H2O = a halide anion + a primary alcohol + H(+). Functionally, catalyzes hydrolytic cleavage of carbon-halogen bonds in halogenated aliphatic compounds, leading to the formation of the corresponding primary alcohols, halide ions and protons. The chain is Haloalkane dehalogenase from Agrobacterium fabrum (strain C58 / ATCC 33970) (Agrobacterium tumefaciens (strain C58)).